The chain runs to 180 residues: Cytochrome c oxidase assembly protein CtaG (180 aa).

The Cytoplasmic portion of the chain corresponds to 1–8 (MSKKSNKS). The helical; Signal-anchor for type II membrane protein transmembrane segment at 9–29 (LAFSLLGLIVSMVLLSFAAVP) threads the bilayer. Residues 30 to 180 (LYNLFCKVTG…SFFKVRDVKK (151 aa)) are Periplasmic-facing.

Belongs to the COX11/CtaG family.

The protein resides in the cell inner membrane. Exerts its effect at some terminal stage of cytochrome c oxidase synthesis, probably by being involved in the insertion of the copper B into subunit I. The chain is Cytochrome c oxidase assembly protein CtaG from Rickettsia bellii (strain RML369-C).